A 747-amino-acid chain; its full sequence is Zinc finger and BTB domain-containing protein 47 (747 aa).

Positions 15 to 83 (CDVDLVLVPQ…IYTSKLLVNA (69 aa)) constitute a BTB domain. Lysine 190 participates in a covalent cross-link: Glycyl lysine isopeptide (Lys-Gly) (interchain with G-Cter in SUMO2). The interval 243 to 424 (QTLHVSTGPE…ARGPPATDGL (182 aa)) is disordered. The span at 267–277 (GREDGLQRHSD) shows a compositional bias: basic and acidic residues. Residues 278-354 (EEEEDDEEEE…SEEEEGEEGE (77 aa)) show a composition bias toward acidic residues. Residues 380 to 398 (RSRENARRRGTPEPEEAGR) show a composition bias toward basic and acidic residues. The C2H2-type 1 zinc-finger motif lies at 436–459 (HPCQKCPRVFNNRWYLEKHMNVTH). Residues 463–485 (QICDQCGKRFLLESELLLHRQTD) form a C2H2-type 2; degenerate zinc finger. 7 C2H2-type zinc fingers span residues 490 to 513 (IQCVTCGKAFKKLWSLHEHNKIVH), 520 to 542 (FSCEICEKKFYTMAHVRKHMVAH), 548 to 570 (FTCETCGKSFKRSMSLKVHSLQH), 576 to 598 (FRCENCNERFQYKYQLRSHMSIH), 604 to 626 (FMCQWCGKDFNMKQYFDEHMKTH), 632 to 654 (YICEICGKSFTSRPNMKRHRRTH), and 660 to 687 (YPCDVCGQRFRFSNMLKAHKEKCFRVSH). The interval 694 to 747 (VPAAPGLPPTQPQAHALPLLPGLPQTLPPPPHLPPPPPLFPTTASPGGRMNANN) is disordered. Pro residues predominate over residues 719–733 (TLPPPPHLPPPPPLF).

This sequence belongs to the krueppel C2H2-type zinc-finger protein family.

It is found in the nucleus. Functionally, may be involved in transcriptional regulation. This is Zinc finger and BTB domain-containing protein 47 (ZBTB47) from Homo sapiens (Human).